The chain runs to 504 residues: Deoxyguanosinetriphosphate triphosphohydrolase (504 aa).

Residues 66-273 (RLTHSLEVQQ…MEAADDISYC (208 aa)) form the HD domain.

The protein belongs to the dGTPase family. Type 1 subfamily. Homotetramer. Mg(2+) serves as cofactor.

It catalyses the reaction dGTP + H2O = 2'-deoxyguanosine + triphosphate + H(+). Its function is as follows. dGTPase preferentially hydrolyzes dGTP over the other canonical NTPs. The polypeptide is Deoxyguanosinetriphosphate triphosphohydrolase (Klebsiella pneumoniae subsp. pneumoniae (strain ATCC 700721 / MGH 78578)).